We begin with the raw amino-acid sequence, 218 residues long: Deoxyribose-phosphate aldolase (218 aa).

Catalysis depends on Asp89, which acts as the Proton donor/acceptor. Lys152 serves as the catalytic Schiff-base intermediate with acetaldehyde. Lys182 acts as the Proton donor/acceptor in catalysis.

This sequence belongs to the DeoC/FbaB aldolase family. DeoC type 1 subfamily.

It localises to the cytoplasm. It catalyses the reaction 2-deoxy-D-ribose 5-phosphate = D-glyceraldehyde 3-phosphate + acetaldehyde. Its pathway is carbohydrate degradation; 2-deoxy-D-ribose 1-phosphate degradation; D-glyceraldehyde 3-phosphate and acetaldehyde from 2-deoxy-alpha-D-ribose 1-phosphate: step 2/2. Functionally, catalyzes a reversible aldol reaction between acetaldehyde and D-glyceraldehyde 3-phosphate to generate 2-deoxy-D-ribose 5-phosphate. In Kocuria rhizophila (strain ATCC 9341 / DSM 348 / NBRC 103217 / DC2201), this protein is Deoxyribose-phosphate aldolase.